A 311-amino-acid polypeptide reads, in one-letter code: MDKSCNSSGDSSAVSASATSSTGNNTTNRDHYLRQLNKLSHKISKPTNSSSSVSVANREIDLPPPPPLQINQGNLHQHQPPVYNINKNDFRDVVQKLTGSPAHERISAPPQQPIHHPKPQQSSRLHRIRPPPLVHVINRPPGLLNDALIPQGSHHMNQNWTGVGFNLRPTAPLSPLPPLPPVHAAAESPVSSYMRYLQNSMFAIDSNRKEFSGLSPLAPLVSPRWYQQQENAPPSQHNSFPPPHPPPPSSAVSQTVPTSIPAPPLFGCSSSPKSPYGLLSPSILLSPSSGQLGFPVSPTTVPLPSPKYKGH.

The segment covering 1–27 has biased composition (low complexity); the sequence is MDKSCNSSGDSSAVSASATSSTGNNTT. Positions 1 to 78 are disordered; that stretch reads MDKSCNSSGD…QINQGNLHQH (78 aa). The VQ motif lies at 90–99; that stretch reads FRDVVQKLTG. Disordered stretches follow at residues 103–125, 228–266, and 290–311; these read HERISAPPQQPIHHPKPQQSSRL, QQENAPPSQHNSFPPPHPPPPSSAVSQTVPTSIPAPPLF, and GQLGFPVSPTTVPLPSPKYKGH. Residues 240 to 249 show a composition bias toward pro residues; sequence FPPPHPPPPS. Low complexity predominate over residues 290–302; it reads GQLGFPVSPTTVP.

Interacts (via N-terminus) with WRKY8. In terms of tissue distribution, highly expressed in roots and at lower levels in rosette leaves, cauline leaves, stems, flowers and siliques.

The protein localises to the nucleus. Functions as a negative regulator of salt stress response. Functions as a repressor of WRKY8 transcription factor by decreasing the DNA-binding activity of WRKY8 and acts antagonistically with WRKY8 to regulate sodium and potassium homeostasis under salt stress. This is VQ motif-containing protein 9 from Arabidopsis thaliana (Mouse-ear cress).